A 41-amino-acid chain; its full sequence is MSGFKGYLSTVPVVFAIWLTFTAGLIIEINRLFPDGLVFSF.

Residues 7–27 (YLSTVPVVFAIWLTFTAGLII) form a helical membrane-spanning segment.

This sequence belongs to the PsaJ family.

It is found in the plastid. It localises to the chloroplast thylakoid membrane. Functionally, may help in the organization of the PsaE and PsaF subunits. The chain is Photosystem I reaction center subunit IX from Bigelowiella natans (Pedinomonas minutissima).